A 495-amino-acid polypeptide reads, in one-letter code: GTPase Der (495 aa).

EngA-type G domains follow at residues 3–166 (PVIA…MDAE) and 208–381 (IKLA…DCST). GTP is bound by residues 9–16 (GRPNVGKS), 56–60 (DTGGI), 118–121 (NKTD), 214–221 (GRPNVGKS), 261–265 (DTAGV), and 326–329 (NKWD). Residues 382-466 (KRVGTSLLTR…PIRIQFKEGE (85 aa)) form the KH-like domain.

It belongs to the TRAFAC class TrmE-Era-EngA-EngB-Septin-like GTPase superfamily. EngA (Der) GTPase family. As to quaternary structure, associates with the 50S ribosomal subunit.

Functionally, GTPase that plays an essential role in the late steps of ribosome biogenesis. The polypeptide is GTPase Der (Yersinia pseudotuberculosis serotype IB (strain PB1/+)).